A 555-amino-acid chain; its full sequence is Glutamine--tRNA ligase (555 aa).

The 'HIGH' region signature appears at 35-45 (PEPNGYLHIGH). ATP-binding positions include 36 to 38 (EPN) and 42 to 48 (HIGHAKS). L-glutamine is bound by residues Asp68 and Tyr213. ATP-binding positions include Thr232, 262 to 263 (RL), and 270 to 272 (MSK). Residues 269-273 (VMSKR) carry the 'KMSKS' region motif.

The protein belongs to the class-I aminoacyl-tRNA synthetase family. In terms of assembly, monomer.

It localises to the cytoplasm. The enzyme catalyses tRNA(Gln) + L-glutamine + ATP = L-glutaminyl-tRNA(Gln) + AMP + diphosphate. The sequence is that of Glutamine--tRNA ligase from Photobacterium profundum (strain SS9).